The chain runs to 397 residues: Acetate kinase 2 (397 aa).

Asn-10 contacts Mg(2+). Lys-17 is an ATP binding site. Position 90 (Arg-90) interacts with substrate. The active-site Proton donor/acceptor is Asp-147. Residues 207-211 (HLGNG), 281-283 (DAR), and 329-333 (GIGEN) contribute to the ATP site. Glu-385 serves as a coordination point for Mg(2+).

This sequence belongs to the acetokinase family. In terms of assembly, homodimer. Mg(2+) serves as cofactor. The cofactor is Mn(2+).

Its subcellular location is the cytoplasm. The catalysed reaction is acetate + ATP = acetyl phosphate + ADP. It functions in the pathway metabolic intermediate biosynthesis; acetyl-CoA biosynthesis; acetyl-CoA from acetate: step 1/2. Its function is as follows. Catalyzes the formation of acetyl phosphate from acetate and ATP. Can also catalyze the reverse reaction. The polypeptide is Acetate kinase 2 (Aliivibrio fischeri (strain ATCC 700601 / ES114) (Vibrio fischeri)).